The sequence spans 993 residues: Replication protein 1a (993 aa).

The interval 51–409 (NVLGVKDSEV…TIVINGMSMQ (359 aa)) is methyltransferase. An Alphavirus-like MT domain is found at 72-290 (HLTQQEFAPH…HDWENIKSFL (219 aa)). Positions 545–576 (SDRPEAPSSTPDDTADVCGKEQEVSELDSLSA) are disordered. Residues 687 to 838 (CVICNSESLS…KIIPDETSDA (152 aa)) form the (+)RNA virus helicase ATP-binding domain. The interval 712 to 975 (VDGVAGCGKT…LTRHKVTFRY (264 aa)) is ATP-dependent helicase. ATP is bound at residue 714–721 (GVAGCGKT). Residues 839–993 (DTTFRSPQDV…DLIAECIARA (155 aa)) form the (+)RNA virus helicase C-terminal domain.

Belongs to the bromoviridae replication protein 1a family. Interacts with RNA-directed RNA polymerase 2a.

It is found in the host endoplasmic reticulum membrane. Functionally, involved in the virus replication. Contains a helicase domain and a methyltransferase domain. The methyltransferase domain is probably involved in viral RNA capping. Involved in the formation of ER membrane spherular invaginations in which RNA replication complexes form. This is Replication protein 1a from Cucumis sativus (Cucumber).